A 236-amino-acid chain; its full sequence is Opacity protein opA50 (236 aa).

A signal peptide is located at residue Ala-1.

Belongs to the opacity porin family.

It localises to the cell outer membrane. Functionally, implicated in a number of adherence functions. OPA proteins are implicated in pathogenesis and are subject to phase variation. This chain is Opacity protein opA50 (opaC), found in Neisseria gonorrhoeae.